The primary structure comprises 373 residues: Bifunctional enzyme IspD/IspF (373 aa).

The interval 1 to 213 is 2-C-methyl-D-erythritol 4-phosphate cytidylyltransferase; the sequence is MSDLTLVLLG…CLQKPSATKR (213 aa). Positions 213–373 are 2-C-methyl-D-erythritol 2,4-cyclodiphosphate synthase; that stretch reads RIGNGLDVHA…TLHYFDWSEI (161 aa). A divalent metal cation is bound by residues Asp219 and His221. 4-CDP-2-C-methyl-D-erythritol 2-phosphate-binding positions include 219–221 and 245–246; these read DVH and HS. His253 serves as a coordination point for a divalent metal cation. Residues 267–269, 272–276, 343–346, Phe350, and Arg353 each bind 4-CDP-2-C-methyl-D-erythritol 2-phosphate; these read DIG, FPDSD, and TTTE.

The protein in the N-terminal section; belongs to the IspD/TarI cytidylyltransferase family. IspD subfamily. This sequence in the C-terminal section; belongs to the IspF family. Requires a divalent metal cation as cofactor.

It carries out the reaction 2-C-methyl-D-erythritol 4-phosphate + CTP + H(+) = 4-CDP-2-C-methyl-D-erythritol + diphosphate. The enzyme catalyses 4-CDP-2-C-methyl-D-erythritol 2-phosphate = 2-C-methyl-D-erythritol 2,4-cyclic diphosphate + CMP. The protein operates within isoprenoid biosynthesis; isopentenyl diphosphate biosynthesis via DXP pathway; isopentenyl diphosphate from 1-deoxy-D-xylulose 5-phosphate: step 2/6. It functions in the pathway isoprenoid biosynthesis; isopentenyl diphosphate biosynthesis via DXP pathway; isopentenyl diphosphate from 1-deoxy-D-xylulose 5-phosphate: step 4/6. Functionally, bifunctional enzyme that catalyzes the formation of 4-diphosphocytidyl-2-C-methyl-D-erythritol from CTP and 2-C-methyl-D-erythritol 4-phosphate (MEP) (IspD), and catalyzes the conversion of 4-diphosphocytidyl-2-C-methyl-D-erythritol 2-phosphate (CDP-ME2P) to 2-C-methyl-D-erythritol 2,4-cyclodiphosphate (ME-CPP) with a corresponding release of cytidine 5-monophosphate (CMP) (IspF). In Nitratiruptor sp. (strain SB155-2), this protein is Bifunctional enzyme IspD/IspF.